The sequence spans 179 residues: MSRIGKMPIKLAEQAKIEIKDNVISVSGPKGNLEQRLVPEVTVDIADGQVAVTRIDDSKRSRAMHGLYRMLISNMLEGVTSGFSKKLLINGVGFRAEKKAEFLALTLGYSHMIYFKAPEEIAIECPDPTSIVVSGIDKALVGQVAAKIRSFRKPEPYRGKGIRYSDEFVRRKEGKTAGK.

The protein belongs to the universal ribosomal protein uL6 family. As to quaternary structure, part of the 50S ribosomal subunit.

Its function is as follows. This protein binds to the 23S rRNA, and is important in its secondary structure. It is located near the subunit interface in the base of the L7/L12 stalk, and near the tRNA binding site of the peptidyltransferase center. In Chlorobium phaeobacteroides (strain BS1), this protein is Large ribosomal subunit protein uL6.